Here is a 171-residue protein sequence, read N- to C-terminus: Small ribosomal subunit protein mS25 (171 aa).

It belongs to the mitochondrion-specific ribosomal protein mS25 family. Component of the mitochondrial ribosome small subunit (28S) which comprises a 12S rRNA and about 30 distinct proteins.

The protein localises to the mitochondrion. This Mus musculus (Mouse) protein is Small ribosomal subunit protein mS25 (Mrps25).